We begin with the raw amino-acid sequence, 297 residues long: Large ribosomal subunit protein uL18 (297 aa).

Position 2 is an N-acetylglycine (Gly-2). N6-acetyllysine is present on residues Lys-5 and Lys-48. Ser-185 bears the Phosphoserine mark. N6-acetyllysine; alternate is present on Lys-220. Lys-220 is covalently cross-linked (Glycyl lysine isopeptide (Lys-Gly) (interchain with G-Cter in SUMO1); alternate). Lys-220 is covalently cross-linked (Glycyl lysine isopeptide (Lys-Gly) (interchain with G-Cter in SUMO2); alternate). At Thr-232 the chain carries Phosphothreonine. Residues 253-297 are disordered; the sequence is YEKKPKREVKKKRWNRPKMSLAQKKDRVAQKKASFLRAQERAAES. A compositionally biased stretch (basic residues) spans 258–268; the sequence is KREVKKKRWNR. Ser-272 carries the phosphoserine modification.

Belongs to the universal ribosomal protein uL18 family. In terms of assembly, component of the large ribosomal subunit (LSU). Part of the 5S RNP complex, which is a LSU subcomplex composed of the 5S RNA, RPL5 and RPL11. Component of a hexameric 5S RNP precursor complex, composed of 5S RNA, RRS1, RPF2/BXDC1, RPL5, RPL11 and HEATR3; this complex acts as a precursor for ribosome assembly. Interacts with isoform 1 of NVL in an ATP-dependent manner. Interacts with RRP1B. Interacts with IPO5, IPO7 and KPNB1; these interactions may be involved in RPL5 nuclear import for the assembly of ribosomal subunits.

It is found in the cytoplasm. The protein resides in the nucleus. The protein localises to the nucleolus. Its function is as follows. Component of the ribosome, a large ribonucleoprotein complex responsible for the synthesis of proteins in the cell. The small ribosomal subunit (SSU) binds messenger RNAs (mRNAs) and translates the encoded message by selecting cognate aminoacyl-transfer RNA (tRNA) molecules. The large subunit (LSU) contains the ribosomal catalytic site termed the peptidyl transferase center (PTC), which catalyzes the formation of peptide bonds, thereby polymerizing the amino acids delivered by tRNAs into a polypeptide chain. The nascent polypeptides leave the ribosome through a tunnel in the LSU and interact with protein factors that function in enzymatic processing, targeting, and the membrane insertion of nascent chains at the exit of the ribosomal tunnel. As part of the 5S RNP/5S ribonucleoprotein particle it is an essential component of the LSU, required for its formation and the maturation of rRNAs. It also couples ribosome biogenesis to p53/TP53 activation. As part of the 5S RNP it accumulates in the nucleoplasm and inhibits MDM2, when ribosome biogenesis is perturbed, mediating the stabilization and the activation of TP53. In Oryctolagus cuniculus (Rabbit), this protein is Large ribosomal subunit protein uL18 (RPL5).